An 87-amino-acid polypeptide reads, in one-letter code: UPF0367 protein P9211_01391 (87 aa).

It belongs to the UPF0367 family.

In Prochlorococcus marinus (strain MIT 9211), this protein is UPF0367 protein P9211_01391.